Consider the following 201-residue polypeptide: Potassium-transporting ATPase KdpC subunit (201 aa).

Residues P7–M27 form a helical membrane-spanning segment.

The protein belongs to the KdpC family. The system is composed of three essential subunits: KdpA, KdpB and KdpC.

The protein localises to the cell inner membrane. Its function is as follows. Part of the high-affinity ATP-driven potassium transport (or Kdp) system, which catalyzes the hydrolysis of ATP coupled with the electrogenic transport of potassium into the cytoplasm. This subunit acts as a catalytic chaperone that increases the ATP-binding affinity of the ATP-hydrolyzing subunit KdpB by the formation of a transient KdpB/KdpC/ATP ternary complex. This Bradyrhizobium diazoefficiens (strain JCM 10833 / BCRC 13528 / IAM 13628 / NBRC 14792 / USDA 110) protein is Potassium-transporting ATPase KdpC subunit.